Reading from the N-terminus, the 502-residue chain is Glycerol kinase (502 aa).

Residue threonine 14 coordinates ADP. 3 residues coordinate ATP: threonine 14, threonine 15, and serine 16. Threonine 14 serves as a coordination point for sn-glycerol 3-phosphate. Position 18 (arginine 18) interacts with ADP. Sn-glycerol 3-phosphate is bound by residues arginine 84, glutamate 85, tyrosine 136, and aspartate 246. Residues arginine 84, glutamate 85, tyrosine 136, aspartate 246, and glutamine 247 each contribute to the glycerol site. ADP contacts are provided by threonine 268 and glycine 311. Residues threonine 268, glycine 311, glutamine 315, and glycine 412 each coordinate ATP. Residues glycine 412 and asparagine 416 each contribute to the ADP site.

Belongs to the FGGY kinase family. In terms of assembly, homotetramer and homodimer (in equilibrium). Heterodimer with EIIA-Glc. Binds 1 zinc ion per glycerol kinase EIIA-Glc dimer. The zinc ion is important for dimerization.

The catalysed reaction is glycerol + ATP = sn-glycerol 3-phosphate + ADP + H(+). Its pathway is polyol metabolism; glycerol degradation via glycerol kinase pathway; sn-glycerol 3-phosphate from glycerol: step 1/1. Its activity is regulated as follows. Activity of this regulatory enzyme is affected by several metabolites. Allosterically and non-competitively inhibited by fructose 1,6-bisphosphate (FBP) and unphosphorylated phosphocarrier protein EIIA-Glc (III-Glc), an integral component of the bacterial phosphotransferase (PTS) system. Its function is as follows. Key enzyme in the regulation of glycerol uptake and metabolism. Catalyzes the phosphorylation of glycerol to yield sn-glycerol 3-phosphate. This Escherichia coli O7:K1 (strain IAI39 / ExPEC) protein is Glycerol kinase.